Reading from the N-terminus, the 308-residue chain is GTPase Era (308 aa).

The region spanning 14–181 is the Era-type G domain; that stretch reads RCGFVALIGA…RSTLAEMVPP (168 aa). The interval 22-29 is G1; it reads GAPNVGKS. 22–29 is a binding site for GTP; sequence GAPNVGKS. The G2 stretch occupies residues 48–52; that stretch reads QTTRA. A G3 region spans residues 69–72; sequence DTPG. GTP contacts are provided by residues 69 to 73 and 131 to 134; these read DTPGI and NKVD. Positions 131–134 are G4; the sequence is NKVD. Positions 160–162 are G5; sequence IAA. The KH type-2 domain occupies 212-289; the sequence is LHQELPYQST…HLFLFVKVRE (78 aa).

Belongs to the TRAFAC class TrmE-Era-EngA-EngB-Septin-like GTPase superfamily. Era GTPase family. In terms of assembly, monomer.

Its subcellular location is the cytoplasm. The protein resides in the cell inner membrane. An essential GTPase that binds both GDP and GTP, with rapid nucleotide exchange. Plays a role in 16S rRNA processing and 30S ribosomal subunit biogenesis and possibly also in cell cycle regulation and energy metabolism. The sequence is that of GTPase Era from Bradyrhizobium diazoefficiens (strain JCM 10833 / BCRC 13528 / IAM 13628 / NBRC 14792 / USDA 110).